A 68-amino-acid polypeptide reads, in one-letter code: Alpha-conotoxin-like Lt1.2 (68 aa).

The N-terminal stretch at 1–21 (MGMRMMFIMFMLVVLATTVDT) is a signal peptide. Positions 22–48 (FTSDRALDAMNAAASNKASRLIALAVR) are excised as a propeptide. 2 cysteine pairs are disulfide-bonded: C50–C56 and C51–C64. The lacks the Ser-Xaa-Pro motif that is crucial for potent interaction with nAChR stretch occupies residues 52–54 (ARA). G65 is modified (glycine amide).

The protein belongs to the conotoxin A superfamily. In terms of tissue distribution, expressed by the venom duct.

The protein localises to the secreted. Its function is as follows. Alpha-conotoxins act on postsynaptic membranes, they bind to the nicotinic acetylcholine receptors (nAChR) and thus inhibit them. Has a distinct nAChR binding mode from other alpha-conotoxins, due to a different three residue motif (Ala-Xaa-Ala instead of the conserved Ser-Xaa-Pro motif). This chain is Alpha-conotoxin-like Lt1.2, found in Conus litteratus (Lettered cone).